Consider the following 601-residue polypeptide: MMSRKRQASSNDFFDMEQLLIANDALVHQNHSTPNHASDELSVNDPSPLSRGLQSDVNSNISRNISNTFFKKSIFFFVYYCKQALEFISTVFSIIKFLLNRRKVSFLLSFLLLFSLFLLIPNDGRVNIKFFYKDFVDRIPFRFIPSNFNISFGKHLEQAKSLFKSKFGNSSSTYNERDSIMPLLKLQSNLTEAKTLLYQNPISPEDVLLHFWDRNLMSTYDLKIQDINDSVNPLLNTYLDFIEKDIYLVSHLPVSEKHPGNIPISLVNKSVQAICSFAEHYNLLRNPSYRGFLRINNGESIFNLLCIEDLHESVNLDILCLKDILRNIAQSSKEAMYIVKRHNSSQSFYGNRSTTNFSIINSGLYLKKDAAKNLLAKQFDATYSYYHKDLEESVHQKLNSNLEKRVEKYIKHSCSQRNVADHPDFALKVVGAVVDYGWTFPKPKFSDILRDYWGKKANLPTALLDTSINSNWCNYEDTVQVSVRLNRPMYVRHISLIFPIHGDDSYFPREIQMFGLINDINYQILSNMNNLVLLATIPVSLSSVFEVNYYYLPKFSDTPGLLEEAYFNTFVFRAFSKNESLTSQICLYHIGIHGKEINEEF.

The next 3 helical transmembrane spans lie at 74–94 (IFFF…VFSI), 104–124 (VSFL…PNDG), and 531–551 (LVLL…NYYY).

The protein resides in the endoplasmic reticulum membrane. This is an uncharacterized protein from Schizosaccharomyces pombe (strain 972 / ATCC 24843) (Fission yeast).